A 118-amino-acid chain; its full sequence is Putative membrane protein insertion efficiency factor (118 aa).

This sequence belongs to the UPF0161 family.

The protein localises to the cell inner membrane. Functionally, could be involved in insertion of integral membrane proteins into the membrane. In Helicobacter pylori (strain HPAG1), this protein is Putative membrane protein insertion efficiency factor.